The primary structure comprises 312 residues: Ribonuclease HIII (312 aa).

The region spanning 95–311 is the RNase H type-2 domain; that stretch reads FNCIGSDEAG…REKAQKILKP (217 aa). 3 residues coordinate a divalent metal cation: D101, E102, and D206.

It belongs to the RNase HII family. RnhC subfamily. Requires Mn(2+) as cofactor. Mg(2+) is required as a cofactor.

The protein resides in the cytoplasm. The enzyme catalyses Endonucleolytic cleavage to 5'-phosphomonoester.. In terms of biological role, endonuclease that specifically degrades the RNA of RNA-DNA hybrids. In Staphylococcus aureus (strain USA300), this protein is Ribonuclease HIII.